A 695-amino-acid polypeptide reads, in one-letter code: Probable Rho-GTPase-activating protein 7 (695 aa).

The span at 1 to 11 (MLSAPSSSTTP) shows a compositional bias: low complexity. The segment at 1 to 26 (MLSAPSSSTTPASPPTSPPNTTSSDD) is disordered. Positions 33 to 307 (PKVEAILNSE…ALDNINANTD (275 aa)) constitute an F-BAR domain. Residues 320-499 (EDNKNPTDAS…SVSPQPSSPT (180 aa)) are disordered. 2 stretches are compositionally biased toward polar residues: residues 336 to 348 (PPSS…SAGK) and 366 to 382 (PLQN…NPSV). Composition is skewed to low complexity over residues 383 to 432 (ASPA…RTSS), 458 to 467 (PIQTTTIQTS), and 488 to 499 (PTSVSPQPSSPT). Phosphoserine is present on residues S496 and S497. The Rho-GAP domain occupies 506 to 692 (ARLDAIILRE…ILIDYCFTIF (187 aa)).

This is Probable Rho-GTPase-activating protein 7 (rga7) from Schizosaccharomyces pombe (strain 972 / ATCC 24843) (Fission yeast).